Here is a 516-residue protein sequence, read N- to C-terminus: Putative sel1-like repeat-containing protein R850 (516 aa).

Sel1-like repeat units follow at residues 103–138 (ALTY…NMNS) and 230–265 (SISQ…KQGD).

This chain is Putative sel1-like repeat-containing protein R850, found in Acanthamoeba polyphaga (Amoeba).